The primary structure comprises 1071 residues: SLIT-ROBO Rho GTPase-activating protein 2 (1071 aa).

An F-BAR domain is found at 22-325 (KEIRAQLTEQ…AVENLDATSD (304 aa)). Residues 181-203 (LKEAEKQEEKQIGKSVKQEDRQT) are compositionally biased toward basic and acidic residues. The disordered stretch occupies residues 181–211 (LKEAEKQEEKQIGKSVKQEDRQTPRSPDSTA). Position 206 is a phosphoserine (Ser-206). Residues 363 to 401 (QSELVQRRQQLQSRLSTLKIENEEVKKTMEATLQTIQDI) adopt a coiled-coil conformation. Phosphoserine occurs at positions 427, 500, 691, 695, and 724. Positions 489 to 679 (ARRSSTVRKQ…TIIIQHENIF (191 aa)) constitute a Rho-GAP domain. Residues 703–726 (THGETISAEDSTQDVTAEHHTSDD) form a disordered region. Residues 728–787 (CEPIEAIAKFDYVGRTARELSFKKGASLLLYQRASDDWWEGRHNGIDGLIPHQYIVVQDT) form the SH3 domain. Disordered stretches follow at residues 794–820 (RSSP…GASC) and 835–936 (NKQR…NHRP). Position 795 is a phosphoserine (Ser-795). Composition is skewed to polar residues over residues 857-867 (LGSSLTDSSSP), 874-885 (RPSSQPIMSQNL), and 897-907 (GHGSLNSISRH). Position 916 is a phosphoserine (Ser-916). Positions 919-933 (IRKTATAGRSKSFNN) are enriched in polar residues. Arg-927 carries the symmetric dimethylarginine; by PRMT5 modification. Ser-930 is modified (phosphoserine). Residues 940–968 (EVIAQDIEATMNSALNELQELERQSSAKH) adopt a coiled-coil conformation. The disordered stretch occupies residues 983-1012 (SPVVAPTSEPSSPLHTQLLKDPEPAFQRSA). Phosphoserine is present on residues Ser-990, Ser-994, Ser-1013, and Ser-1027. Residues 1029–1071 (KMAAPVKPPATRPKPTVFPKTNATSPGVNSSASPQSTDKSCTV) are disordered. Residues 1047–1071 (PKTNATSPGVNSSASPQSTDKSCTV) show a composition bias toward polar residues.

As to quaternary structure, homodimer. Forms a heterooligomer with SRGAP1 and SRGAP3 through its F-BAR domain. Interacts (via SH3 domain) with GPHN. Interacts (via SH3 domain) with FMNL1 (activated by RAC1); regulates the actin filament severing activity of FMNL1 and actin dynamics. Interacts (via SH3 domain) with FMNL3. Interacts with RAC1; specifically stimulates RAC1 GTPase activity. Interacts (via F-BAR domain) with HOMER1. Interacts with ROBO1 and ROBO2. Interacts with FASLG. Interacts with PRMT5. Post-translationally, methylation at Arg-927 is required for the stimulation of cell migration, dimerization and localization at the plasma membrane protrusions.

The protein localises to the cell membrane. The protein resides in the cell projection. It localises to the dendritic spine. It is found in the postsynaptic density. Its subcellular location is the postsynaptic cell membrane. The protein localises to the lamellipodium. The protein resides in the cytoplasmic vesicle. It localises to the phagosome. It is found in the nucleus. Its subcellular location is the cytoplasm. The protein localises to the cytosol. Its function is as follows. Postsynaptic RAC1 GTPase activating protein (GAP) that plays a key role in neuronal morphogenesis and migration mainly during development of the cerebral cortex. Regulates excitatory and inhibitory synapse maturation and density in cortical pyramidal neurons. SRGAP2/SRGAP2A limits excitatory and inhibitory synapse density through its RAC1-specific GTPase activating activity, while it promotes maturation of both excitatory and inhibitory synapses through its ability to bind to the postsynaptic scaffolding protein HOMER1 at excitatory synapses, and the postsynaptic protein GPHN at inhibitory synapses. Mechanistically, acts by binding and deforming membranes, thereby regulating actin dynamics to regulate cell migration and differentiation. Promotes cell repulsion and contact inhibition of locomotion: localizes to protrusions with curved edges and controls the duration of RAC1 activity in contact protrusions. In non-neuronal cells, may also play a role in cell migration by regulating the formation of lamellipodia and filopodia. The protein is SLIT-ROBO Rho GTPase-activating protein 2 of Rattus norvegicus (Rat).